A 315-amino-acid chain; its full sequence is Protein sprouty homolog 2 (315 aa).

Polar residues predominate over residues 1–15 (MEARAQSGNGSQPLL). The interval 1–140 (MEARAQSGNG…SEQRLLGSSF (140 aa)) is disordered. Over residues 20 to 32 (DGGRPRGEPDPRD) the composition is skewed to basic and acidic residues. Low complexity predominate over residues 108 to 140 (SRSISTVSSGSRSSTRTSTSSSSSEQRLLGSSF). The interval 118 to 315 (SRSSTRTSTS…VPRRNFEKPT (198 aa)) is required for interaction with CAV1. An SPR domain is found at 177–291 (RCEDCGKCKC…CYDRVNRPGC (115 aa)). Positions 178–315 (CEDCGKCKCK…VPRRNFEKPT (138 aa)) are required for interaction with TESK1.

The protein belongs to the sprouty family. In terms of assembly, forms heterodimers with SPRY1. Forms a tripartite complex containing GAB1, METTL13 and SPRY2. Within the complex interacts with METTL13. Interacts with RAF1. Interacts (via C-terminus) with TESK1 (via C-terminus); the interaction disrupts SPRY2 interaction with GRB2, potentially via disruption of SPRY2 serine dephosphorylation. Interacts with PPP2R1A/PP2A-A and PPP2CA/PP2A-C; the interaction with PPP2CA/PP2A-C is inhibited by interaction with TESK1, possibly by vesicular sequestration of SPRY2. Inhibition of the interaction with the serine/threonine-protein phosphatase 2A (PP2A) holoenzyme results in loss of PP2A-mediated dephosphorylation, resulting in the loss of SPRY2 interaction with GRB2. Interacts with GRB2. Interacts with CBL/C-CBL; the interaction inhibits CBL-mediated ubiquitination of EGFR. Interacts (via C-terminus) with CAV1 (via C-terminus). Post-translationally, cleaved at Pro-144 by the prolyl endopeptidase FAP (seprase) activity (in vitro).

It localises to the cytoplasm. Its subcellular location is the cytoskeleton. The protein localises to the cell projection. It is found in the ruffle membrane. Functionally, antagonist of fibroblast growth factor (FGF) pathways via inhibition of FGF-mediated phosphorylation of ERK1/2. Thereby acts as an antagonist of FGF-induced retinal lens fiber differentiation, may inhibit limb bud outgrowth and may negatively modulate respiratory organogenesis. Inhibits TGFB-induced epithelial-to-mesenchymal transition in retinal lens epithelial cells. Inhibits CBL/C-CBL-mediated EGFR ubiquitination. The sequence is that of Protein sprouty homolog 2 (SPRY2) from Pongo abelii (Sumatran orangutan).